A 397-amino-acid polypeptide reads, in one-letter code: Probable peptidoglycan glycosyltransferase FtsW (397 aa).

Over 1–26 (MSPRNSALERFRQHQKIPEKRWQRLA) the chain is Cytoplasmic. Residues 27 to 47 (FPDVGLLLCWLALIVIGMVMV) form a helical membrane-spanning segment. Residues 48 to 69 (TSSSLSEAHVERLSTHHFAIRQ) are Periplasmic-facing. The helical transmembrane segment at 70-90 (GIFYVGSSIFAYIAFMLGTNF) threads the bilayer. Residues 91–96 (YREKAK) are Cytoplasmic-facing. Residues 97–117 (FILGLAFLGLLLVYAPGIGVV) traverse the membrane as a helical segment. The Periplasmic portion of the chain corresponds to 118 to 126 (VNGSRRWLN). The helical transmembrane segment at 127–147 (LGVINLQVGEFAKLAVFIFTA) threads the bilayer. The Cytoplasmic segment spans residues 148–159 (AYLQHHTQRLDH). A helical transmembrane segment spans residues 160 to 180 (SWQPIIGLLAVTACFALMFYL). Over 181–185 (QPDFG) the chain is Periplasmic. A helical membrane pass occupies residues 186-206 (TMVVIVATVLGMLFLSGVSIW). Arginine 207 is a topological domain (cytoplasmic). A helical transmembrane segment spans residues 208 to 228 (LLLLGVLIAPAMVWVLISESY). At 229–294 (RLRRLTTFIN…IFSIIAEETG (66 aa)) the chain is on the periplasmic side. A helical transmembrane segment spans residues 295–315 (LVGALIVMAILMILVWRAFAI). At 316–328 (GYLADRMRKRFSS) the chain is on the cytoplasmic side. A helical membrane pass occupies residues 329–349 (LLAYGIGLWLGLQSLINIGVT). The Periplasmic segment spans residues 350–359 (TGALPTKGLT). The chain crosses the membrane as a helical span at residues 360–380 (LPLISYGGSSILMTSIALAIL). The Cytoplasmic segment spans residues 381–397 (ARIDAESRFIARLEGKI).

This sequence belongs to the SEDS family. FtsW subfamily.

The protein resides in the cell inner membrane. It carries out the reaction [GlcNAc-(1-&gt;4)-Mur2Ac(oyl-L-Ala-gamma-D-Glu-L-Lys-D-Ala-D-Ala)](n)-di-trans,octa-cis-undecaprenyl diphosphate + beta-D-GlcNAc-(1-&gt;4)-Mur2Ac(oyl-L-Ala-gamma-D-Glu-L-Lys-D-Ala-D-Ala)-di-trans,octa-cis-undecaprenyl diphosphate = [GlcNAc-(1-&gt;4)-Mur2Ac(oyl-L-Ala-gamma-D-Glu-L-Lys-D-Ala-D-Ala)](n+1)-di-trans,octa-cis-undecaprenyl diphosphate + di-trans,octa-cis-undecaprenyl diphosphate + H(+). It functions in the pathway cell wall biogenesis; peptidoglycan biosynthesis. Functionally, peptidoglycan polymerase that is essential for cell division. The sequence is that of Probable peptidoglycan glycosyltransferase FtsW from Dichelobacter nodosus (strain VCS1703A).